Here is a 504-residue protein sequence, read N- to C-terminus: Maturase K (504 aa).

This sequence belongs to the intron maturase 2 family. MatK subfamily.

It localises to the plastid. It is found in the chloroplast. Usually encoded in the trnK tRNA gene intron. Probably assists in splicing its own and other chloroplast group II introns. The protein is Maturase K of Matthiola incana (Common stock).